A 505-amino-acid polypeptide reads, in one-letter code: Glycerol kinase 2 (505 aa).

An ADP-binding site is contributed by Thr-17. The ATP site is built by Thr-17, Thr-18, and Ser-19. Thr-17 is a binding site for sn-glycerol 3-phosphate. Arg-21 contributes to the ADP binding site. Residues Arg-87, Glu-88, Tyr-139, and Asp-249 each coordinate sn-glycerol 3-phosphate. Residues Arg-87, Glu-88, Tyr-139, Asp-249, and Gln-250 each contribute to the glycerol site. Positions 271 and 314 each coordinate ADP. The ATP site is built by Thr-271, Gly-314, Gln-318, and Gly-415. ADP contacts are provided by Gly-415 and Asn-419.

This sequence belongs to the FGGY kinase family.

The enzyme catalyses glycerol + ATP = sn-glycerol 3-phosphate + ADP + H(+). It functions in the pathway polyol metabolism; glycerol degradation via glycerol kinase pathway; sn-glycerol 3-phosphate from glycerol: step 1/1. With respect to regulation, inhibited by fructose 1,6-bisphosphate (FBP). In terms of biological role, key enzyme in the regulation of glycerol uptake and metabolism. Catalyzes the phosphorylation of glycerol to yield sn-glycerol 3-phosphate. This Pseudomonas aeruginosa (strain ATCC 15692 / DSM 22644 / CIP 104116 / JCM 14847 / LMG 12228 / 1C / PRS 101 / PAO1) protein is Glycerol kinase 2.